Here is a 331-residue protein sequence, read N- to C-terminus: Ketol-acid reductoisomerase (NADP(+)) (331 aa).

One can recognise a KARI N-terminal Rossmann domain in the interval 2–182 (AQLFYDSDAD…GGTRAGILET (181 aa)). NADP(+) contacts are provided by residues 25–28 (YGSQ), serine 51, serine 53, and 83–86 (DEFQ). Residue histidine 108 is part of the active site. Glycine 134 lines the NADP(+) pocket. In terms of domain architecture, KARI C-terminal knotted spans 183–328 (NFKEETETDL…KGLRSMFSWL (146 aa)). Mg(2+) contacts are provided by aspartate 191, glutamate 195, glutamate 227, and glutamate 231. A substrate-binding site is contributed by serine 252.

Belongs to the ketol-acid reductoisomerase family. It depends on Mg(2+) as a cofactor.

It carries out the reaction (2R)-2,3-dihydroxy-3-methylbutanoate + NADP(+) = (2S)-2-acetolactate + NADPH + H(+). The catalysed reaction is (2R,3R)-2,3-dihydroxy-3-methylpentanoate + NADP(+) = (S)-2-ethyl-2-hydroxy-3-oxobutanoate + NADPH + H(+). It participates in amino-acid biosynthesis; L-isoleucine biosynthesis; L-isoleucine from 2-oxobutanoate: step 2/4. It functions in the pathway amino-acid biosynthesis; L-valine biosynthesis; L-valine from pyruvate: step 2/4. In terms of biological role, involved in the biosynthesis of branched-chain amino acids (BCAA). Catalyzes an alkyl-migration followed by a ketol-acid reduction of (S)-2-acetolactate (S2AL) to yield (R)-2,3-dihydroxy-isovalerate. In the isomerase reaction, S2AL is rearranged via a Mg-dependent methyl migration to produce 3-hydroxy-3-methyl-2-ketobutyrate (HMKB). In the reductase reaction, this 2-ketoacid undergoes a metal-dependent reduction by NADPH to yield (R)-2,3-dihydroxy-isovalerate. In Synechococcus sp. (strain CC9902), this protein is Ketol-acid reductoisomerase (NADP(+)).